A 424-amino-acid chain; its full sequence is Myb family transcription factor RLI1 (424 aa).

The interval 144-165 is disordered; sequence RPQKRDSGERTPLPPPSQQQHQ. One can recognise an HTH myb-type domain in the interval 238–298; that stretch reads APSKTRIRWT…HLQKYRIAKY (61 aa). Residues 269–294 constitute a DNA-binding region (H-T-H motif); that stretch reads PKGILKLMNSDGLTIYHIKSHLQKYR. Residues 326–391 adopt a coiled-coil conformation; that stretch reads MQITEALRVQ…ELDDVVAFAA (66 aa). The LHEQLE motif lies at 342–347; that stretch reads LHEQLE.

The protein belongs to the MYB-CC family. Interacts with SPX1 and SPX2 in the nucleus; these interactions prevent binding to the promoters of target genes, thus regulating negatively leaf inclination in response to phosphate (Pi) starvation. In terms of assembly, homodimer. Interacts with PHR2 in the nucleus. In terms of tissue distribution, mostly expressed in roots and leaves blades and, to a lower extent, in leaves sheaths, culms and panicles. Localized in leaves lamina joints. As to expression, expressed equally in shoots and roots. Mostly expressed in shoots and, to a lower extent, in roots.

The protein resides in the nucleus. Transcription factor binding to specific DNA sequences of target genes promoters, such as the motif R1BS 5'-NAKATNCN-3' and the motif P1BS 5'-GNATATNC-3' to trigger their expression. Nitrate-induced component involved in modulating phosphate (Pi) response and homeostasis together with PHR2; activates directly the expression of Pi starvation-induced (PSI) genes upon nitrate disponibility, thus triggering the nitrate-induced phosphate response (NIPR) promoting Pi uptake activity. Functionally, binds preferentially to the P1BS motif 5'-GNATATNC-3' in target genes promoters. Its function is as follows. Binds preferentially to the R1BS motif 5'-NAKATNCN-3' in target genes promoters, including several genes involved in the plant hormone signal transduction pathway. Involved in the shoot architecture; positively regulates leaf inclination by affecting lamina joint cell elongation via the direct promotion of ILI4/BU1 and BC1 genes expression, especially in response to phosphate (Pi) availability. Regulates both brassinolide (BL) biosynthesis and signaling by directly activating BL-biosynthesis and signaling genes. The chain is Myb family transcription factor RLI1 from Oryza sativa subsp. japonica (Rice).